We begin with the raw amino-acid sequence, 345 residues long: 3'-5' exoribonuclease 1 (345 aa).

Basic and acidic residues-rich tracts occupy residues methionine 1–glycine 11 and proline 19–glycine 46. Residues methionine 1–isoleucine 50 are disordered. 2 positions are modified to phosphoserine: serine 55 and serine 58. One can recognise an SAP domain in the interval isoleucine 72 to tyrosine 106. The region spanning isoleucine 126 to alanine 302 is the Exonuclease domain. The Mg(2+) site is built by aspartate 130 and glutamate 132. Residue glutamate 132 is the Proton acceptor of the active site. The AMP site is built by glutamate 132 and alanine 133. Position 230 (aspartate 230) interacts with Mg(2+). Histidine 289 (proton acceptor) is an active-site residue. AMP is bound at residue histidine 289. Aspartate 294 serves as a coordination point for Mg(2+).

In terms of assembly, identified in a histone pre-mRNA complex, at least composed of ERI1, LSM11, SLBP, SNRPB, SYNCRIP and YBX1. Binds to 40S and 60S ribosomal subunits and to 80S assembled ribosomes. Interacts in a cooperative manner with SLBP to the mature 3'-end of histone mRNAs. Found in a ternary complex with SLBP and the stem-loop structure of the 3'-end of histone mRNAs. It depends on Mg(2+) as a cofactor. Widely expressed with high levels in spleen, thymus and testis (at protein level).

It localises to the cytoplasm. It is found in the nucleus. Its subcellular location is the nucleolus. It catalyses the reaction Exonucleolytic cleavage in the 3'- to 5'-direction to yield nucleoside 5'-phosphates.. Although it can bind simultaneously with SLBP to the 3'-end of histone mRNA, the presence of SLBP prevents the exonuclease activity. RNA exonuclease that binds to the 3'-end of histone mRNAs and degrades them, suggesting that it plays an essential role in histone mRNA decay after replication. A 2' and 3'-hydroxyl groups at the last nucleotide of the histone 3'-end is required for efficient 3'-end histone mRNA exonuclease activity and degradation of RNA substrates. Also able to degrade the 3'-overhangs of short interfering RNAs (siRNAs) in vitro, suggesting a possible role as regulator of RNA interference (RNAi). Required for binding the 5'-ACCCA-3' sequence present in stem-loop structure. Able to bind other mRNAs. Required for 5.8S rRNA 3'-end processing. Also binds to 5.8s ribosomal RNA. Binds with high affinity to the stem-loop structure of replication-dependent histone pre-mRNAs. In vitro, does not have sequence specificity. In vitro, has weak DNA exonuclease activity. In vitro, shows biphasic kinetics such that there is rapid hydrolysis of the last three unpaired RNA nucleotides in the 39 flanking sequence followed by a much slower cleavage through the stem that occurs over a longer incubation period in the order of hours. ERI1-mediated RNA metabolism plays a key role in chondrogenesis. The chain is 3'-5' exoribonuclease 1 (Eri1) from Mus musculus (Mouse).